Here is a 95-residue protein sequence, read N- to C-terminus: Co-chaperonin GroES (95 aa).

Belongs to the GroES chaperonin family. In terms of assembly, heptamer of 7 subunits arranged in a ring. Interacts with the chaperonin GroEL.

The protein resides in the cytoplasm. Together with the chaperonin GroEL, plays an essential role in assisting protein folding. The GroEL-GroES system forms a nano-cage that allows encapsulation of the non-native substrate proteins and provides a physical environment optimized to promote and accelerate protein folding. GroES binds to the apical surface of the GroEL ring, thereby capping the opening of the GroEL channel. The chain is Co-chaperonin GroES from Streptococcus uberis (strain ATCC BAA-854 / 0140J).